The sequence spans 229 residues: DNA mismatch repair protein MutH (229 aa).

This sequence belongs to the MutH family.

The protein localises to the cytoplasm. Sequence-specific endonuclease that cleaves unmethylated GATC sequences. It is involved in DNA mismatch repair. The protein is DNA mismatch repair protein MutH of Escherichia coli O17:K52:H18 (strain UMN026 / ExPEC).